We begin with the raw amino-acid sequence, 536 residues long: MSSFQVYRAALLLSILATANAQQVGTYTTETHPSLTWQTCTSDGSCTTNDGEVVIDANWRWVHSTSSATNCYTGNEWDTSICTDDVTCAANCALDGATYEATYGVTTSGSELRLNFVTQGSSKNIGSRLYLMSDDSNYELFKLLGQEFTFDVDVSNLPCGLNGALYFVAMDADGGTSEYSGNKAGAKYGTGYCDSQCPRDLKFINGEANCDGWEPSSNNVNTGVGDHGSCCAEMDVWEANSISNAFTAHPCDSVSQTMCDGDSCGGTYSASGDRYSGTCDPDGCDYNPYRLGNTDFYGPGLTVDTNSPFTVVTQFITDDGTSSGTLTEIKRLYVQNGEVIANGASTYSSVNGSSITSAFCESEKTLFGDENVFDKHGGLEGMGEAMAKGMVLVLSLWDDYAADMLWLDSDYPVNSSASTPGVARGTCSTDSGVPATVEAESPNAYVTYSNIKFGPIGSTYSSGSSSGSGSSSSSSSTTTKATSTTLKTTSTTSSGSSSTSAAQAYGQCGGQGWTGPTTCVSGYTCTYENAYYSQCL.

The signal sequence occupies residues Met1–Ala21. A catalytic region spans residues Gln22–Ser458. Glu233 acts as the Nucleophile in catalysis. Glu238 acts as the Proton donor in catalysis. Asn351 and Asn414 each carry an N-linked (GlcNAc...) asparagine glycan. Positions Thr459 to Ser500 are ser/Thr-rich linker. The interval Ser464–Thr499 is disordered. The 37-residue stretch at Ser500–Leu536 folds into the CBM1 domain. 2 disulfide bridges follow: Cys508/Cys525 and Cys519/Cys535.

This sequence belongs to the glycosyl hydrolase 7 (cellulase C) family.

It localises to the secreted. It catalyses the reaction Hydrolysis of (1-&gt;4)-beta-D-glucosidic linkages in cellulose and cellotetraose, releasing cellobiose from the non-reducing ends of the chains.. Its function is as follows. The biological conversion of cellulose to glucose generally requires three types of hydrolytic enzymes: (1) Endoglucanases which cut internal beta-1,4-glucosidic bonds; (2) Exocellobiohydrolases that cut the disaccharide cellobiose from the non-reducing end of the cellulose polymer chain; (3) Beta-1,4-glucosidases which hydrolyze the cellobiose and other short cello-oligosaccharides to glucose. This chain is Probable 1,4-beta-D-glucan cellobiohydrolase B (cbhB), found in Aspergillus niger (strain ATCC MYA-4892 / CBS 513.88 / FGSC A1513).